A 61-amino-acid chain; its full sequence is MEVIEVVYEDGVFKPLKKIKLKEGTRGVVVVRLPKQISEIAKKYRIKVREDVLEEFLEERR.

The protein belongs to the UPF0165 family.

Functionally, possibly the antitoxin component of a type II toxin-antitoxin (TA) system. The protein is Putative antitoxin PYRAB11980 of Pyrococcus abyssi (strain GE5 / Orsay).